A 47-amino-acid chain; its full sequence is MAKGKRTFQPNNRRRARVHGFRLRMRTRAGRAIVTGRRRKGRRSLTA.

It belongs to the bacterial ribosomal protein bL34 family.

This Mycobacterium sp. (strain JLS) protein is Large ribosomal subunit protein bL34.